Reading from the N-terminus, the 118-residue chain is Large ribosomal subunit protein bL20 (118 aa).

This sequence belongs to the bacterial ribosomal protein bL20 family.

Binds directly to 23S ribosomal RNA and is necessary for the in vitro assembly process of the 50S ribosomal subunit. It is not involved in the protein synthesizing functions of that subunit. This Ralstonia nicotianae (strain ATCC BAA-1114 / GMI1000) (Ralstonia solanacearum) protein is Large ribosomal subunit protein bL20.